The sequence spans 117 residues: Ig heavy chain V region 5-76 (117 aa).

The first 19 residues, 1–19 (MNFVLSLIFLALILKGVQC), serve as a signal peptide directing secretion. A framework-1 region spans residues 20 to 49 (EVHLVESGGGLVKPGGSLKLSCVVSGFTFN). A disulfide bridge connects residues Cys-41 and Cys-115. Residues 50–54 (KYAMS) are complementarity-determining-1. The tract at residues 55 to 68 (WVRQTPEKRLEWVA) is framework-2. Residues 69-85 (TISSGGLYTYYPDSVKG) form a complementarity-determining-2 region. The segment at 86–117 (RFTISRDNAGNTLYLQMSSLRSEDTAMYYCAR) is framework-3.

The sequence is that of Ig heavy chain V region 5-76 from Mus musculus (Mouse).